The primary structure comprises 212 residues: Methylthioribulose-1-phosphate dehydratase (212 aa).

Zn(2+)-binding residues include His-98 and His-100.

The protein belongs to the aldolase class II family. MtnB subfamily. The cofactor is Zn(2+).

The enzyme catalyses 5-(methylsulfanyl)-D-ribulose 1-phosphate = 5-methylsulfanyl-2,3-dioxopentyl phosphate + H2O. The protein operates within amino-acid biosynthesis; L-methionine biosynthesis via salvage pathway; L-methionine from S-methyl-5-thio-alpha-D-ribose 1-phosphate: step 2/6. Catalyzes the dehydration of methylthioribulose-1-phosphate (MTRu-1-P) into 2,3-diketo-5-methylthiopentyl-1-phosphate (DK-MTP-1-P). The chain is Methylthioribulose-1-phosphate dehydratase from Picosynechococcus sp. (strain ATCC 27264 / PCC 7002 / PR-6) (Agmenellum quadruplicatum).